Here is a 1311-residue protein sequence, read N- to C-terminus: DENN domain-containing protein 5B (1311 aa).

Residues 53 to 270 (ATAAGENFDQ…EVPLPASGRS (218 aa)) form the uDENN domain. The span at 154–165 (QAEHNTSAQNCT) shows a compositional bias: polar residues. A disordered region spans residues 154–201 (QAEHNTSAQNCTSSSSSSSSSSSSSSMDSLSSSLDDVDSPSAHGGRRT). The segment covering 166–187 (SSSSSSSSSSSSSSMDSLSSSL) has biased composition (low complexity). The cDENN domain occupies 289 to 452 (ELPLADFPLA…AVMSLQTSVL (164 aa)). In terms of domain architecture, dDENN spans 454-619 (KELKSTSLRE…DNKIMSQWEE (166 aa)). The RUN 1 domain maps to 809 to 969 (LEENTLIASL…DYFCFTSVFT (161 aa)). Residues 854 to 874 (EQQLESPVSNGQERRKTESSV) form a disordered region. Residues 962–982 (FCFTSVFTTIMIPYRAVIIPI) form a helical membrane-spanning segment. The PLAT domain maps to 973–1081 (IPYRAVIIPI…DDGSLERVLI (109 aa)). The RUN 2 domain maps to 1155–1306 (TVLLCGEGGL…FPITLETSLT (152 aa)).

The protein belongs to the RAB6IP1 family.

The protein localises to the membrane. Guanine nucleotide exchange factor (GEF) which may activate the small GTPases Rab. May promote the exchange of GDP to GTP, converting inactive GDP-bound Rab proteins into their active GTP-bound form. The chain is DENN domain-containing protein 5B (dennd5b) from Danio rerio (Zebrafish).